Reading from the N-terminus, the 218-residue chain is Cytochrome b6 (218 aa).

A helical membrane pass occupies residues 35–55 (IFYCLGGITLVCFLIQFATGF). Heme c is bound at residue Cys38. 2 residues coordinate heme b: His89 and His103. Transmembrane regions (helical) follow at residues 93-113 (ASMM…TGGF), 119-139 (LTWV…VTGY), and 189-209 (LHTF…FLMI). His190 and His205 together coordinate heme b.

The protein belongs to the cytochrome b family. PetB subfamily. The 4 large subunits of the cytochrome b6-f complex are cytochrome b6, subunit IV (17 kDa polypeptide, PetD), cytochrome f and the Rieske protein, while the 4 small subunits are PetG, PetL, PetM and PetN. The complex functions as a dimer. The cofactor is heme b. It depends on heme c as a cofactor.

The protein resides in the cellular thylakoid membrane. Its function is as follows. Component of the cytochrome b6-f complex, which mediates electron transfer between photosystem II (PSII) and photosystem I (PSI), cyclic electron flow around PSI, and state transitions. The chain is Cytochrome b6 from Prochlorococcus marinus (strain MIT 9215).